Reading from the N-terminus, the 480-residue chain is Ochratoxinase (480 aa).

Zn(2+) contacts are provided by histidine 111, histidine 113, lysine 246, histidine 287, and histidine 307. Residue lysine 246 is part of the active site. Residue aspartate 378 is part of the active site.

The protein belongs to the metallo-dependent hydrolases superfamily. Ochratoxinase amidase 2 family. As to quaternary structure, homooctamer. Zn(2+) is required as a cofactor.

The protein localises to the secreted. The catalysed reaction is ochratoxin A + H2O = ochratoxin alpha + L-phenylalanine. The Zn(2+)-specific chelator 1,10-phenanthroline inhibits the enzyme activity. Its function is as follows. Carboxypeptidase that catalyzes the release of a C-terminal amino acid with specific catalytic activity for aromatic amino acids such as phenylalanine. Is able to degrade ochratoxin A, one of the five major mycotoxins most harmful to humans and animals that is produced by Aspergillus and Penicillium species and occurs in a wide range of agricultural products. The protein is Ochratoxinase of Aspergillus niger (strain ATCC 1015 / CBS 113.46 / FGSC A1144 / LSHB Ac4 / NCTC 3858a / NRRL 328 / USDA 3528.7).